The sequence spans 553 residues: Solute carrier family 22 member 12 (553 aa).

The helical transmembrane segment at 16–36 (FQLLQAVALVTPILWVTTQNM) threads the bilayer. N56, N102, and N107 each carry an N-linked (GlcNAc...) asparagine glycan. 11 helical membrane-spanning segments follow: residues 146–166 (PMAQ…CGHA), 182–202 (LVSV…YCLF), 204–224 (FLVA…LMEW), 232–252 (LMMT…GSVA), 260–280 (MLQL…WWLP), 351–371 (FISM…ALDL), 378–398 (IFLL…GSLL), 407–427 (LCQA…ILVP), 435–455 (SSLA…VTIF), 466–486 (MTAV…GPLV), and 495–515 (WLPL…ALLL). S534 is subject to Phosphoserine.

Belongs to the major facilitator (TC 2.A.1) superfamily. Organic cation transporter (TC 2.A.1.19) family. In terms of assembly, interacts with PDZK1. Post-translationally, N-glycosylated. In terms of tissue distribution, expressed in the proximal tubular epithelial cells in kidney.

Its subcellular location is the apical cell membrane. It catalyses the reaction urate(out) + (S)-lactate(in) = urate(in) + (S)-lactate(out). It carries out the reaction nicotinate(in) + urate(out) = nicotinate(out) + urate(in). The enzyme catalyses urate(out) + n chloride(in) = urate(in) + n chloride(out). The catalysed reaction is orotate(out) + nicotinate(in) = orotate(in) + nicotinate(out). Its function is as follows. Electroneutral antiporter that translocates urate across the apical membrane of proximal tubular cells in exchange for monovalent organic or inorganic anions. Involved in renal reabsorption of urate and helps maintaining blood levels of uric acid. Mediates urate uptake by an exchange with organic anions such as (S)-lactate and nicotinate, and inorganic anion Cl(-). Other inorganic anions such as Br(-), I(-) and NO3(-) may also act as counteranions that exchange for urate. Also mediates orotate tubular uptake coupled with nicotinate efflux and to a lesser extent with lactate efflux, therefore displaying a potential role in orotate renal reabsorption. Orotate transport is Cl(-)-dependent. This chain is Solute carrier family 22 member 12 (Slc22a12), found in Rattus norvegicus (Rat).